A 345-amino-acid polypeptide reads, in one-letter code: GTP cyclohydrolase-2 (345 aa).

Residues 1–27 are disordered; sequence MTIDNYDNSKQDSSKYEVSGTGDGRNG. A GTP-binding site is contributed by 143-147; that stretch reads RIHSE. C148, C159, and C161 together coordinate Zn(2+). GTP contacts are provided by residues Q164, 197 to 199, and T219; that span reads EGR. The active-site Proton acceptor is the D231. The active-site Nucleophile is R233. The GTP site is built by T254 and K259. Residues 312–345 are disordered; that stretch reads PLKLHTNPQPTETSEAQNQNRMNSALSSTSTLAI. A compositionally biased stretch (polar residues) spans 317–345; the sequence is TNPQPTETSEAQNQNRMNSALSSTSTLAI.

This sequence belongs to the GTP cyclohydrolase II family. Zn(2+) serves as cofactor.

It catalyses the reaction GTP + 4 H2O = 2,5-diamino-6-hydroxy-4-(5-phosphoribosylamino)-pyrimidine + formate + 2 phosphate + 3 H(+). It functions in the pathway cofactor biosynthesis; riboflavin biosynthesis; 5-amino-6-(D-ribitylamino)uracil from GTP: step 1/4. Its function is as follows. Catalyzes the conversion of GTP to 2,5-diamino-6-ribosylamino-4(3H)-pyrimidinone 5'-phosphate (DARP), formate and pyrophosphate. The sequence is that of GTP cyclohydrolase-2 (RIB1) from Saccharomyces cerevisiae (strain ATCC 204508 / S288c) (Baker's yeast).